The chain runs to 82 residues: MLKIRLTRIGAPKKPCYRIIVTEARSPRDATYTDLVGTYNPMTNPETVIINAEKVLYWIGKGAQPTDTVARLLKKAGIVNSN.

The protein belongs to the bacterial ribosomal protein bS16 family.

This chain is Small ribosomal subunit protein bS16, found in Dehalococcoides mccartyi (strain ATCC BAA-2100 / JCM 16839 / KCTC 5957 / BAV1).